The chain runs to 107 residues: uncharacterized protein (107 aa).

Residues 9 to 31 (AAAIITAPTILAMMSTVLRALIF) form a helical membrane-spanning segment.

The protein resides in the membrane. This is an uncharacterized protein from Archaeoglobus fulgidus (strain ATCC 49558 / DSM 4304 / JCM 9628 / NBRC 100126 / VC-16).